A 241-amino-acid chain; its full sequence is 1-(5-phosphoribosyl)-5-[(5-phosphoribosylamino)methylideneamino] imidazole-4-carboxamide isomerase (241 aa).

The active-site Proton acceptor is aspartate 8. Aspartate 129 (proton donor) is an active-site residue.

The protein belongs to the HisA/HisF family.

It is found in the cytoplasm. It carries out the reaction 1-(5-phospho-beta-D-ribosyl)-5-[(5-phospho-beta-D-ribosylamino)methylideneamino]imidazole-4-carboxamide = 5-[(5-phospho-1-deoxy-D-ribulos-1-ylimino)methylamino]-1-(5-phospho-beta-D-ribosyl)imidazole-4-carboxamide. It functions in the pathway amino-acid biosynthesis; L-histidine biosynthesis; L-histidine from 5-phospho-alpha-D-ribose 1-diphosphate: step 4/9. The polypeptide is 1-(5-phosphoribosyl)-5-[(5-phosphoribosylamino)methylideneamino] imidazole-4-carboxamide isomerase (Chloroflexus aggregans (strain MD-66 / DSM 9485)).